The chain runs to 4023 residues: Hybrid PKS-NRPS synthetase pvhA (4023 aa).

The region spanning 7–440 is the Ketosynthase family 3 (KS3) domain; the sequence is DERIAVIGTG…GTNAHAIIEE (434 aa). Residues cysteine 180, histidine 319, and histidine 360 each act as for beta-ketoacyl synthase activity in the active site. The malonyl-CoA:ACP transacylase (MAT) domain stretch occupies residues 550–871; that stretch reads VFTGQGAQWA…PYVGLLGRGK (322 aa). Residues 945-1080 are N-terminal hotdog fold; that stretch reads HPLLGKRCYD…GVVRATLAEN (136 aa). The segment at 945-1249 is dehydratase (DH) domain; the sequence is HPLLGKRCYD…QAEGLEIVPL (305 aa). The PKS/mFAS DH domain maps to 945–1255; the sequence is HPLLGKRCYD…IVPLAAAVPD (311 aa). Histidine 978 functions as the Proton acceptor; for dehydratase activity in the catalytic mechanism. The interval 1099–1255 is C-terminal hotdog fold; sequence DLSPVDTERF…IVPLAAAVPD (157 aa). The active-site Proton donor; for dehydratase activity is aspartate 1160. Positions 1402–1585 are methyltransferase (MT) domain; it reads AELYEKAIGF…GFSGTDTISP (184 aa). The ketoreductase (KR) domain stretch occupies residues 2120-2291; the sequence is TYLLVGLTGE…GVAGSSINIS (172 aa). Residues 2404 to 2479 enclose the Carrier 1 domain; that stretch reads SIIKEVFLAR…GIIKQVVELL (76 aa). Serine 2439 is subject to O-(pantetheine 4'-phosphoryl)serine. The segment at 2490–2580 is disordered; the sequence is TPQTLSKNPA…VMSKPSASSQ (91 aa). Low complexity predominate over residues 2502-2529; the sequence is PVKAPVSAPSTPAAASQPVLTDSTASSS. Polar residues predominate over residues 2565–2580; sequence PVNTPNVMSKPSASSQ. The tract at residues 2604–3043 is condensation (C) domain; sequence PMSHGQEGFW…DIPSWSELDI (440 aa). Residues 3072–3467 are adenylation (A) (KR) domain; sequence EMITVHGSTT…DGTLVVEGRL (396 aa). Residues 3593–3670 form the Carrier 2 domain; the sequence is SVLSGTERQL…AMADAVQKEV (78 aa). Position 3630 is an O-(pantetheine 4'-phosphoryl)serine (serine 3630). The interval 3783–3932 is reductase (RED) domain; sequence ETDVIMHCVA…IAPVDDMAQS (150 aa).

The protein in the C-terminal section; belongs to the NRP synthetase family.

Its pathway is secondary metabolite biosynthesis. Its function is as follows. Hybrid PKS-NRPS synthetase; part of the gene cluster that mediates the biosynthesis of varicidin A, an antifungal natural product containing a cis-octahydrodecalin core. The PKS module of pvhA together with the enoylreductase pvhC catalyze the formation of the polyketide unit which is then conjugated to L-isoleucine by the condensation domain of the NRPS module. Activity of the Dieckmann cyclase domain (RED) of pvhA results in release of an acyclic tetramate. The cytochrome P450 monooxygenase pvhE then catalyzes the oxidation of the C21 methyl group to a to carboxylate group. The methyltransferase pvhD then further methylates the pvhE product. The Diels-Alderase pvhB is able to catalyze Diels-Alder cycloaddition using both pvhE and pvhD products as substrates to form the decalin ring, yielding varicidin B and A, respectively. This is Hybrid PKS-NRPS synthetase pvhA from Talaromyces variabilis (Penicillium variabile).